Consider the following 44-residue polypeptide: Conotoxin Rg11a (44 aa).

Cystine bridges form between Cys1–Cys15, Cys8–Cys22, Cys14–Cys30, and Cys21–Cys36.

As to expression, expressed by the venom duct.

The protein localises to the secreted. Its function is as follows. Neurotoxin. Elicits hypersensibility when injected intracranially in mice. May act via potassium channel currents. In Conus regius (Crown cone), this protein is Conotoxin Rg11a.